We begin with the raw amino-acid sequence, 105 residues long: UPF0235 protein A1C_06510 (105 aa).

Belongs to the UPF0235 family.

This Rickettsia akari (strain Hartford) protein is UPF0235 protein A1C_06510.